The sequence spans 64 residues: Large ribosomal subunit protein bL35 (64 aa).

This sequence belongs to the bacterial ribosomal protein bL35 family.

This Lactiplantibacillus plantarum (strain ATCC BAA-793 / NCIMB 8826 / WCFS1) (Lactobacillus plantarum) protein is Large ribosomal subunit protein bL35.